Consider the following 490-residue polypeptide: Cytochrome P450 2C6 (490 aa).

Residues Lys249 and Lys375 each carry the N6-acetyllysine modification. Cys435 contributes to the heme binding site.

Belongs to the cytochrome P450 family. Requires heme as cofactor.

It is found in the endoplasmic reticulum membrane. The protein localises to the microsome membrane. It carries out the reaction an organic molecule + reduced [NADPH--hemoprotein reductase] + O2 = an alcohol + oxidized [NADPH--hemoprotein reductase] + H2O + H(+). Its function is as follows. Cytochromes P450 are a group of heme-thiolate monooxygenases. In liver microsomes, this enzyme is involved in an NADPH-dependent electron transport pathway. It oxidizes a variety of structurally unrelated compounds, including steroids, fatty acids, and xenobiotics. This Rattus norvegicus (Rat) protein is Cytochrome P450 2C6 (Cyp2c6).